Reading from the N-terminus, the 326-residue chain is tRNA dimethylallyltransferase 2 (326 aa).

14–21 (GPTASGKT) lines the ATP pocket. 16-21 (TASGKT) contacts substrate. The segment at 39–42 (DSMQ) is interaction with substrate tRNA.

The protein belongs to the IPP transferase family. Monomer. It depends on Mg(2+) as a cofactor.

It catalyses the reaction adenosine(37) in tRNA + dimethylallyl diphosphate = N(6)-dimethylallyladenosine(37) in tRNA + diphosphate. In terms of biological role, catalyzes the transfer of a dimethylallyl group onto the adenine at position 37 in tRNAs that read codons beginning with uridine, leading to the formation of N6-(dimethylallyl)adenosine (i(6)A). This is tRNA dimethylallyltransferase 2 from Geotalea daltonii (strain DSM 22248 / JCM 15807 / FRC-32) (Geobacter daltonii).